We begin with the raw amino-acid sequence, 299 residues long: MIKETDLENIPDLLIKFNEPLSNYTYTKVGGPADILAFPATIEALTELSAKAKATDTPVTVLGNASNLIVRDGGIRGVVILLEKLDSVKVAGYTIEAQAGAKLKEVTQVAQANSLTGFEFACGIPGSIGGAVFMNAGAYGGEIYQVLVSCKVMDAAGNVSVLSASEMQFGYRHSVIRDKNLIVLSAKFELQAGDPTQIQNEMDRLNFLRESKQPLEYPSCGSVFKRPVGHFAGQLIQEAKLQGQRIGGVEVSKKHAGFMVNVADGNATDYEKLIALVIEKVKENSGVTLEPEVRIIGEK.

Residues 28–193 (KVGGPADILA…LSAKFELQAG (166 aa)) enclose the FAD-binding PCMH-type domain. Arg-172 is an active-site residue. Residue Ser-222 is the Proton donor of the active site. The active site involves Glu-292.

Belongs to the MurB family. Requires FAD as cofactor.

The protein resides in the cytoplasm. It carries out the reaction UDP-N-acetyl-alpha-D-muramate + NADP(+) = UDP-N-acetyl-3-O-(1-carboxyvinyl)-alpha-D-glucosamine + NADPH + H(+). It functions in the pathway cell wall biogenesis; peptidoglycan biosynthesis. Functionally, cell wall formation. The polypeptide is UDP-N-acetylenolpyruvoylglucosamine reductase (Lactococcus lactis subsp. cremoris (strain SK11)).